The following is a 185-amino-acid chain: Ribosome-recycling factor (185 aa).

The protein belongs to the RRF family.

It localises to the cytoplasm. Responsible for the release of ribosomes from messenger RNA at the termination of protein biosynthesis. May increase the efficiency of translation by recycling ribosomes from one round of translation to another. The chain is Ribosome-recycling factor from Streptococcus thermophilus (strain ATCC BAA-491 / LMD-9).